We begin with the raw amino-acid sequence, 643 residues long: Alpha-dioxygenase PIOX (643 aa).

Histidine 167 functions as the Proton acceptor in the catalytic mechanism. Residue aspartate 168 participates in Ca(2+) binding. Position 172 (histidine 172) interacts with heme b. Threonine 220, tryptophan 222, aspartate 224, and serine 226 together coordinate Ca(2+). Residues histidine 392, arginine 489, and arginine 493 each coordinate heme b.

This sequence belongs to the peroxidase family. Requires heme b as cofactor. Ca(2+) serves as cofactor.

The catalysed reaction is a 1,2-saturated fatty acid + O2 = a (2R)-2-hydroperoxy fatty acid. It catalyses the reaction (9Z,12Z,15Z)-octadecatrienoate + O2 = (R)-2-hydroperoxy-(9Z,12Z,15Z)-octadecatrienoate. It carries out the reaction (9Z,12Z)-octadecadienoate + O2 = (2R,9Z,12Z)-2-hydroperoxyoctadecadienoate. Its function is as follows. Alpha-dioxygenase that catalyzes the primary oxygenation step of a variety of 14-20 carbon fatty acids, containing up to three unsaturated bonds, into their corresponding 2R-hydroperoxides. Involved in the production of oxylipins that function in cell signaling, wound healing, and protection from infection. The sequence is that of Alpha-dioxygenase PIOX from Nicotiana tabacum (Common tobacco).